The chain runs to 660 residues: Putative ATP-dependent RNA helicase Pl10 (660 aa).

The span at 1 to 11 (MSHVAEEDELG) shows a compositional bias: acidic residues. The tract at residues 1 to 117 (MSHVAEEDEL…SRGGRSGFGK (117 aa)) is disordered. Ser-2 is modified (N-acetylserine). Residues 12-21 (LDQQLAGLDL) show a composition bias toward low complexity. The span at 24-34 (RDSQSGGSTAS) shows a compositional bias: polar residues. Residues 44–66 (RNREAAKAFYDKDGSRWSKDKDA) show a composition bias toward basic and acidic residues. N6-acetyllysine is present on Lys-55. 3 positions are modified to phosphoserine: Ser-80, Ser-84, and Ser-89. Positions 93–103 (GRFDERGRSDY) are enriched in basic and acidic residues. Arg-100 carries the omega-N-methylarginine modification. Ser-101 bears the Phosphoserine mark. Residue Tyr-103 is modified to Phosphotyrosine. Position 109 is an omega-N-methylarginine (Arg-109). Position 117 is an N6-acetyllysine (Lys-117). The Q motif motif lies at 179–207 (ESFSDVEMGEIIMGNIELTRYTRPTPVQK). Ser-182 carries the post-translational modification Phosphoserine. 199 to 206 (YTRPTPVQ) provides a ligand contact to ATP. Positions 210-402 (IPIIKEKRDL…RDFLDEYIFL (193 aa)) constitute a Helicase ATP-binding domain. Lys-214 participates in a covalent cross-link: Glycyl lysine isopeptide (Lys-Gly) (interchain with G-Cter in SUMO2). 223-230 (AQTGSGKT) provides a ligand contact to ATP. The DEAD box signature appears at 346 to 349 (DEAD). The region spanning 413–574 (NITQKVVWVE…EVPSWLENMA (162 aa)) is the Helicase C-terminal domain. Ser-455 is subject to Phosphoserine. At Arg-590 the chain carries Omega-N-methylarginine. 3 positions are modified to phosphoserine: Ser-592, Ser-603, and Ser-610. Residues 598-632 (RDYRQSSGASSSSFSSGRASNSRSGGGSHGSSRGF) are disordered. Residues 602–620 (QSSGASSSSFSSGRASNSR) are compositionally biased toward low complexity. 2 positions are modified to omega-N-methylarginine: Arg-615 and Arg-630. Residues 621–632 (SGGGSHGSSRGF) are compositionally biased toward gly residues.

The protein belongs to the DEAD box helicase family. DDX3/DED1 subfamily. As to expression, testis.

The enzyme catalyses ATP + H2O = ADP + phosphate + H(+). Its function is as follows. Putative ATP-dependent RNA helicase. Possible role in a key step of the spermatogenic process. This Mus musculus (Mouse) protein is Putative ATP-dependent RNA helicase Pl10 (D1Pas1).